Here is a 459-residue protein sequence, read N- to C-terminus: Probable PTS system sucrose-specific EIIBC component (459 aa).

A PTS EIIB type-1 domain is found at 1–86 (MHKEIAKELL…VHVWETAPSE (86 aa)). Residue C25 is the Phosphocysteine intermediate; for EIIB activity of the active site. The region spanning 106-459 (KTLSDIFVPI…LFLGFKEETE (354 aa)) is the PTS EIIC type-1 domain. 11 consecutive transmembrane segments (helical) span residues 111–131 (IFVP…LIGM), 147–167 (MLDL…GFSA), 177–197 (LGAV…SMLG), 209–229 (LHIP…SVFV), 245–265 (LDVV…ALIV), 288–308 (AGIA…LSGL), 329–349 (FLVP…LAVF), 360–380 (IALP…VFGV), 388–408 (FIGA…VQVV), 412–432 (YGLT…ANFV), and 434–454 (YMIG…FLGF).

It is found in the cell membrane. Functionally, the phosphoenolpyruvate-dependent sugar phosphotransferase system (sugar PTS), a major carbohydrate active -transport system, catalyzes the phosphorylation of incoming sugar substrates concomitantly with their translocation across the cell membrane. This system may be involved in sucrose transport. The EIIB domain is mainly phosphorylated by the EIIA domains of GamP and PtsA/YpqE. Its function is as follows. Negatively regulates SacY activity by catalyzing its phosphorylation on 'His-99'. The polypeptide is Probable PTS system sucrose-specific EIIBC component (sacX) (Bacillus subtilis (strain 168)).